A 120-amino-acid chain; its full sequence is MINLLRLVVYEKGIPLTYEEWDGGNALHVACGAGGSLKMVKFLVENNILTNIHKKSEKFGDTPLTLAISYDHHDIVDYFKQKFNITSVTLKDLDVIIDRVKANYRRYYNIKKYYENQSKK.

ANK repeat units lie at residues 22 to 52 and 59 to 88; these read DGGN…LTNI and FGDT…ITSV.

The sequence is that of Putative ankyrin repeat protein RBE_1215 from Rickettsia bellii (strain RML369-C).